A 211-amino-acid chain; its full sequence is Arginine exporter protein ArgO (211 aa).

The next 6 helical transmembrane spans lie at 1–21 (MISYYFQGFALGVAMILPLGP), 37–57 (LMIALLCALSDLVLISAGIFG), 68–88 (LLALVTWGGVAFLLWYGFGAL), 111–131 (IIATMLAVTWLNPHVYLDTFV), 147–167 (WFALGTISASFLWFFGLALLA), and 179–199 (AQRIINILVGVVMWLIAFQLA).

This sequence belongs to the LysE/ArgO transporter (TC 2.A.75) family.

It is found in the cell inner membrane. It carries out the reaction L-arginine(in) = L-arginine(out). Its function is as follows. Involved in the export of arginine. Important to control the intracellular level of arginine and the correct balance between arginine and lysine. The polypeptide is Arginine exporter protein ArgO (Salmonella paratyphi A (strain ATCC 9150 / SARB42)).